A 705-amino-acid chain; its full sequence is MSTMPHFSRTLVTTALPYANGPVHLGHLAGVYLPADLYVRYKRLKGEDIIHIGGSDEHGVPITISAEKEGISPRDVVDRYHAMNLDAFTRCGISFDYYGRTSSAVHHATAQEFFSDIEQKGIFQQKTEKLFFDLQAGRFLSDRYVTGTCPVCNNPEANGDQCEQCGTHLSPLELLNPKSKLSDATPELRETLHWYFPLGRFQAALEEYVNSHEGEWRPNVVNYTRTWFKQGLNDRAITRDLDWGVAVPLQSAEAVGKVLYVWFDAVLGYISFTKEWAALQGNAELWKTYWQDPETRLIHFIGKDNVVFHTLMFPSILMAWNEGKTTDCYNLADNVPASEFMNFEGRKFSKSRNYAVYLGEFLDKFPADTLRYSIAMNYPESKDTDFSWQDFQNRTNGELADTLGNFIKRSIDFTNTRFEGVVPASVTKEEWDNLGIDWQATLEQLDSAYEGFHFRDAATLGMEIARAANRYLTSSEPWKVIKVDREAAATTMALSLNLCHALSIALYPVIPETCNRIRAMLGFSEPLEATIQRGTSLLSSLLTPTLQQGHKLREHSEILFTKIEDSAIAPELEKIAKLIAEAEKREAALAESRIEFKPAISFDEFQKVDLRVATVVAAEPVAKANKLLKLRVQVGSLTRQVLAGIAKHYTPEEMVGKQVLLVANLEERTIRGELSQGMILAVENSDGKLFIVQPSGEGINGQSVQ.

The 'HIGH' region signature appears at P17 to H27. Zn(2+)-binding residues include C149, C152, C162, and C165. Positions K347 to S351 match the 'KMSKS' region motif. K350 contributes to the ATP binding site. Positions E604–Q705 constitute a tRNA-binding domain.

The protein belongs to the class-I aminoacyl-tRNA synthetase family. MetG type 1 subfamily. In terms of assembly, homodimer. It depends on Zn(2+) as a cofactor.

The protein localises to the cytoplasm. The catalysed reaction is tRNA(Met) + L-methionine + ATP = L-methionyl-tRNA(Met) + AMP + diphosphate. Is required not only for elongation of protein synthesis but also for the initiation of all mRNA translation through initiator tRNA(fMet) aminoacylation. This Chlorobium chlorochromatii (strain CaD3) protein is Methionine--tRNA ligase.